We begin with the raw amino-acid sequence, 446 residues long: C-type lectin domain family 18 member A (446 aa).

An N-terminal signal peptide occupies residues 1–26 (MLHPETSPGRGHLLAVLLALLGTAWA). An SCP domain is found at 52–182 (LSLHNRLRSW…AAIEAFVCAY (131 aa)). Residue Asn144 is glycosylated (N-linked (GlcNAc...) asparagine). The region spanning 228–261 (PRNPCRMSCQNHGRLNISTCHCHCPPGYTGRYCQ) is the EGF-like domain. 4 disulfide bridges follow: Cys236-Cys249, Cys251-Cys260, Cys327-Cys432, and Cys408-Cys424. The 128-residue stretch at 306-433 (IDGDCFMVSS…CKTRNRYICQ (128 aa)) folds into the C-type lectin domain.

Post-translationally, N-glycosylated. Dectected in all cell lines tested and in peripheral blood cells.

It is found in the secreted. It localises to the endoplasmic reticulum. Its subcellular location is the golgi apparatus. The protein localises to the endosome. Functionally, binds polysaccharides in a Ca(2+)-independent manner with a preferentially binding to fucoidan, beta-glucans and galactans. In Homo sapiens (Human), this protein is C-type lectin domain family 18 member A (CLEC18A).